The sequence spans 391 residues: Ferrochelatase (391 aa).

His-196 and Glu-281 together coordinate Fe cation.

Belongs to the ferrochelatase family.

The protein resides in the cytoplasm. It carries out the reaction heme b + 2 H(+) = protoporphyrin IX + Fe(2+). The protein operates within porphyrin-containing compound metabolism; protoheme biosynthesis; protoheme from protoporphyrin-IX: step 1/1. In terms of biological role, catalyzes the ferrous insertion into protoporphyrin IX. This Prochlorococcus marinus (strain MIT 9211) protein is Ferrochelatase.